Here is a 408-residue protein sequence, read N- to C-terminus: Peptidase T (408 aa).

H78 contributes to the Zn(2+) binding site. The active site involves D80. D140 contributes to the Zn(2+) binding site. E174 functions as the Proton acceptor in the catalytic mechanism. Zn(2+)-binding residues include E175, D197, and H379.

Belongs to the peptidase M20B family. Requires Zn(2+) as cofactor.

It localises to the cytoplasm. It catalyses the reaction Release of the N-terminal residue from a tripeptide.. Its function is as follows. Cleaves the N-terminal amino acid of tripeptides. In Staphylococcus aureus (strain Mu3 / ATCC 700698), this protein is Peptidase T.